The primary structure comprises 215 residues: Peptide methionine sulfoxide reductase MsrA (215 aa).

Cysteine 58 is a catalytic residue.

The protein belongs to the MsrA Met sulfoxide reductase family.

It carries out the reaction L-methionyl-[protein] + [thioredoxin]-disulfide + H2O = L-methionyl-(S)-S-oxide-[protein] + [thioredoxin]-dithiol. The catalysed reaction is [thioredoxin]-disulfide + L-methionine + H2O = L-methionine (S)-S-oxide + [thioredoxin]-dithiol. Functionally, has an important function as a repair enzyme for proteins that have been inactivated by oxidation. Catalyzes the reversible oxidation-reduction of methionine sulfoxide in proteins to methionine. This chain is Peptide methionine sulfoxide reductase MsrA, found in Pseudomonas savastanoi pv. phaseolicola (strain 1448A / Race 6) (Pseudomonas syringae pv. phaseolicola (strain 1448A / Race 6)).